The primary structure comprises 341 residues: Aspartate--ammonia ligase (341 aa).

The protein belongs to the class-II aminoacyl-tRNA synthetase family. AsnA subfamily.

It localises to the cytoplasm. It carries out the reaction L-aspartate + NH4(+) + ATP = L-asparagine + AMP + diphosphate + H(+). Its pathway is amino-acid biosynthesis; L-asparagine biosynthesis; L-asparagine from L-aspartate (ammonia route): step 1/1. This Clostridium tetani (strain Massachusetts / E88) protein is Aspartate--ammonia ligase.